A 377-amino-acid polypeptide reads, in one-letter code: Cyclin-I (377 aa).

Residues 356–377 (TDLSRQEGHASPCPPLQPVSVM) form a disordered region. Over residues 367-377 (PCPPLQPVSVM) the composition is skewed to pro residues.

Belongs to the cyclin family.

This Mus musculus (Mouse) protein is Cyclin-I (Ccni).